The sequence spans 156 residues: Keratin, high-sulfur matrix protein, B2B (156 aa).

An N-acetylalanine modification is found at alanine 1. 4 repeats span residues 26–35 (PTCSQTSCCQ), 36–45 (PTSIQTSCCQ), 46–55 (PISIQTSCCQ), and 56–65 (PTCLQTSGCE).

The keratin products of mammalian epidermal derivatives such as wool and hair consist of microfibrils embedded in a rigid matrix of other proteins. The matrix proteins include the high-sulfur and high-tyrosine keratins, having molecular weights of 6-20 kDa, whereas the microfibrils contain the larger, low-sulfur keratins (40-56 kDa). The protein is Keratin, high-sulfur matrix protein, B2B of Ovis aries (Sheep).